Reading from the N-terminus, the 193-residue chain is uncharacterized protein (193 aa).

The next 4 helical transmembrane spans lie at 8-28 (GVLV…VVAI), 46-66 (FFIA…VASA), 82-102 (GLSI…ALVV), and 141-161 (IALT…LLAA).

The protein to M.leprae ML1222.

The protein resides in the cell membrane. This is an uncharacterized protein from Mycobacterium tuberculosis (strain CDC 1551 / Oshkosh).